A 687-amino-acid polypeptide reads, in one-letter code: DNA-directed RNA polymerase subunit beta' (687 aa).

The Zn(2+) site is built by Cys76, Cys78, Cys94, and Cys97. Mg(2+) contacts are provided by Asp496, Asp498, and Asp500.

This sequence belongs to the RNA polymerase beta' chain family. RpoC1 subfamily. As to quaternary structure, in plastids the minimal PEP RNA polymerase catalytic core is composed of four subunits: alpha, beta, beta', and beta''. When a (nuclear-encoded) sigma factor is associated with the core the holoenzyme is formed, which can initiate transcription. Mg(2+) serves as cofactor. The cofactor is Zn(2+).

Its subcellular location is the plastid. It is found in the chloroplast. It carries out the reaction RNA(n) + a ribonucleoside 5'-triphosphate = RNA(n+1) + diphosphate. In terms of biological role, DNA-dependent RNA polymerase catalyzes the transcription of DNA into RNA using the four ribonucleoside triphosphates as substrates. The chain is DNA-directed RNA polymerase subunit beta' from Ipomoea purpurea (Common morning glory).